The chain runs to 435 residues: ATP-dependent protease ATPase subunit HslU (435 aa).

ATP-binding positions include Val18, 60 to 65 (GVGKTE), Asp248, Glu313, and Arg385.

The protein belongs to the ClpX chaperone family. HslU subfamily. In terms of assembly, a double ring-shaped homohexamer of HslV is capped on each side by a ring-shaped HslU homohexamer. The assembly of the HslU/HslV complex is dependent on binding of ATP.

It localises to the cytoplasm. Functionally, ATPase subunit of a proteasome-like degradation complex; this subunit has chaperone activity. The binding of ATP and its subsequent hydrolysis by HslU are essential for unfolding of protein substrates subsequently hydrolyzed by HslV. HslU recognizes the N-terminal part of its protein substrates and unfolds these before they are guided to HslV for hydrolysis. In Xanthobacter autotrophicus (strain ATCC BAA-1158 / Py2), this protein is ATP-dependent protease ATPase subunit HslU.